A 214-amino-acid chain; its full sequence is Potassium-transporting ATPase KdpC subunit (214 aa).

A helical transmembrane segment spans residues 17–37; it reads LWVITALIYPFSMIAIGQILF.

It belongs to the KdpC family. The system is composed of three essential subunits: KdpA, KdpB and KdpC.

It is found in the cell inner membrane. In terms of biological role, part of the high-affinity ATP-driven potassium transport (or Kdp) system, which catalyzes the hydrolysis of ATP coupled with the electrogenic transport of potassium into the cytoplasm. This subunit acts as a catalytic chaperone that increases the ATP-binding affinity of the ATP-hydrolyzing subunit KdpB by the formation of a transient KdpB/KdpC/ATP ternary complex. This chain is Potassium-transporting ATPase KdpC subunit, found in Microcystis aeruginosa (strain NIES-843 / IAM M-2473).